We begin with the raw amino-acid sequence, 430 residues long: Ribulose bisphosphate carboxylase (430 aa).

Residue Lys160 is the Proton acceptor of the active site. A substrate-binding site is contributed by Lys162. The Mg(2+) site is built by Lys186, Asp188, and Glu189. An N6-carboxylysine modification is found at Lys186. Catalysis depends on His278, which acts as the Proton acceptor. Residues Arg279, His311, Ser348–Gly350, and Gln370–Gly373 contribute to the substrate site.

Belongs to the RuBisCO large chain family. Type III subfamily. As to quaternary structure, homodimer or homodecamer. In contrast to form I RuBisCO, the form III RuBisCO is composed solely of large subunits. Mg(2+) serves as cofactor.

It carries out the reaction 2 (2R)-3-phosphoglycerate + 2 H(+) = D-ribulose 1,5-bisphosphate + CO2 + H2O. It catalyses the reaction D-ribulose 1,5-bisphosphate + O2 = 2-phosphoglycolate + (2R)-3-phosphoglycerate + 2 H(+). Functionally, catalyzes the addition of molecular CO(2) and H(2)O to ribulose 1,5-bisphosphate (RuBP), generating two molecules of 3-phosphoglycerate (3-PGA). Functions in an archaeal AMP degradation pathway, together with AMP phosphorylase and R15P isomerase. This chain is Ribulose bisphosphate carboxylase, found in Pyrococcus horikoshii (strain ATCC 700860 / DSM 12428 / JCM 9974 / NBRC 100139 / OT-3).